A 263-amino-acid chain; its full sequence is Zinc transporter ZupT (263 aa).

A run of 5 helical transmembrane segments spans residues 1–21 (MLFAFGLTLFAGLATGIGGLI), 37–57 (LGFSVGVMLYVSFVEILPGAF), 68–88 (GGSWAAVIGFFGGIALIAIID), 116–136 (MMKMGVLTALAIAIHNFPEGF), and 138–158 (TFLAGLSDPMIAIPVAVAIAI). Residues Asn131 and Glu134 each contribute to the Fe(2+) site. Glu134 lines the Zn(2+) pocket. His159 is a Zn(2+) binding site. Asn160, Glu163, and Glu192 together coordinate Fe(2+). Zn(2+) is bound at residue Glu163. A run of 3 helical transmembrane segments spans residues 184–204 (WATLSGLAEPAGALIGFLLLM), 206–226 (FIGPEALGLCFAAVAGVMVFI), and 243–263 (TAIYGLIAGMAVMAISLLLFI).

Belongs to the ZIP transporter (TC 2.A.5) family. ZupT subfamily.

It is found in the cell membrane. It carries out the reaction Zn(2+)(in) = Zn(2+)(out). Functionally, mediates zinc uptake. May also transport other divalent cations. The polypeptide is Zinc transporter ZupT (Corynebacterium glutamicum (strain ATCC 13032 / DSM 20300 / JCM 1318 / BCRC 11384 / CCUG 27702 / LMG 3730 / NBRC 12168 / NCIMB 10025 / NRRL B-2784 / 534)).